A 366-amino-acid chain; its full sequence is tRNA(Met) cytidine acetate ligase (366 aa).

ATP is bound by residues 7–20 (IAEFNPFHNGHQYL), Gly-101, Asn-145, and Arg-170.

Belongs to the TmcAL family.

It localises to the cytoplasm. It catalyses the reaction cytidine(34) in elongator tRNA(Met) + acetate + ATP = N(4)-acetylcytidine(34) in elongator tRNA(Met) + AMP + diphosphate. Its function is as follows. Catalyzes the formation of N(4)-acetylcytidine (ac(4)C) at the wobble position of elongator tRNA(Met), using acetate and ATP as substrates. First activates an acetate ion to form acetyladenylate (Ac-AMP) and then transfers the acetyl group to tRNA to form ac(4)C34. This Pediococcus pentosaceus (strain ATCC 25745 / CCUG 21536 / LMG 10740 / 183-1w) protein is tRNA(Met) cytidine acetate ligase.